A 230-amino-acid polypeptide reads, in one-letter code: Pyridoxine/pyridoxamine 5'-phosphate oxidase (230 aa).

Substrate contacts are provided by residues 21 to 24 (RVEY) and Lys-87. Residues 82 to 87 (RSVLCK), 97 to 98 (YT), Lys-104, and Gln-126 each bind FMN. Substrate-binding residues include Tyr-144, Arg-148, and Ser-152. Residues 161–162 (QS) and Trp-207 contribute to the FMN site. 213 to 215 (RVH) contacts substrate. Residue Arg-217 coordinates FMN.

Belongs to the pyridoxamine 5'-phosphate oxidase family. Homodimer. Requires FMN as cofactor.

The catalysed reaction is pyridoxamine 5'-phosphate + O2 + H2O = pyridoxal 5'-phosphate + H2O2 + NH4(+). The enzyme catalyses pyridoxine 5'-phosphate + O2 = pyridoxal 5'-phosphate + H2O2. It participates in cofactor metabolism; pyridoxal 5'-phosphate salvage; pyridoxal 5'-phosphate from pyridoxamine 5'-phosphate: step 1/1. Its pathway is cofactor metabolism; pyridoxal 5'-phosphate salvage; pyridoxal 5'-phosphate from pyridoxine 5'-phosphate: step 1/1. In terms of biological role, catalyzes the oxidation of either pyridoxine 5'-phosphate (PNP) or pyridoxamine 5'-phosphate (PMP) into pyridoxal 5'-phosphate (PLP). This Mycolicibacterium smegmatis (strain ATCC 700084 / mc(2)155) (Mycobacterium smegmatis) protein is Pyridoxine/pyridoxamine 5'-phosphate oxidase.